The chain runs to 487 residues: Serine carboxypeptidase-like 38 (487 aa).

An N-terminal signal peptide occupies residues 1–20; it reads MGKQQDWSVTACIFLSLSLA. Intrachain disulfides connect cysteine 119–cysteine 368, cysteine 280–cysteine 290, and cysteine 315–cysteine 336. Serine 215 is a catalytic residue. The N-linked (GlcNAc...) asparagine glycan is linked to asparagine 233. N-linked (GlcNAc...) asparagine glycosylation is found at asparagine 317 and asparagine 357. The active site involves aspartate 407. N-linked (GlcNAc...) asparagine glycosylation is found at asparagine 423 and asparagine 449. Histidine 460 is a catalytic residue.

Belongs to the peptidase S10 family. In terms of tissue distribution, expressed in seedlings, roots, leaves, flowers and siliques.

It is found in the secreted. Functionally, probable carboxypeptidase. The protein is Serine carboxypeptidase-like 38 (SCPL38) of Arabidopsis thaliana (Mouse-ear cress).